The sequence spans 1133 residues: MLAYCVQDATVVDVEKRRNPSKHYVYIINVTWSDSTSQTIYRRYSKFFDLQMQLLDKFPIEGGQKDPKQRIIPFLPGKILFRRSHIRDVAVKRLKPIDEYCRALVRLPPHISQCDEVFRFFEARPEDVNPPKEDYGSSKRKSVWLSSWAESPKKDVTGADATAEPMILEQYVVVSNYKKQENSELSLQAGEVVDVIEKNESGWWFVSTSEEQGWVPATYLEAQNGTRDDSDINTSKTGEVSKRRKAHLRRLDRRWTLGGMVNRQHSREEKYVTVQPYTSQSKDEIGFEKGVTVEVIRKNLEGWWYIRYLGKEGWAPASYLKKAKDDLPTRKKNLAGPVEIIGNIMEISNLLNKKASGDKETPPAEGEGHEAPIAKKEISLPILCNASNGSAVGVPDRTVSRLAQGSPAVARIAPQRAQISSPNLRTRPPPRRESSLGFQLPKPPEPPSVEVEYYTIAEFQSCISDGISFRGGQKAEVIDKNSGGWWYVQIGEKEGWAPASYIDKRKKPNLSRRTSTLTRPKVPPPAPPSKPKEAEEGPTGASESQDSPRKLKYEEPEYDIPAFGFDSEPELSEEPVEDRASGERRPAQPHRPSPASSLQRARFKVGESSEDVALEEETIYENEGFRPYAEDTLSARGSSGDSDSPGSSSLSLTRKNSPKSGSPKSSSLLKLKAEKNAQAEMGKNHSSASFSSSITINTTCCSSSSSSSSSLSKTSGDLKPRSASDAGIRGTPKVRAKKDADANAGLTSCPRAKPSVRPKPFLNRAESQSQEKMDISTLRRQLRPTGQLRGGLKGSKSEDSELPPQTASEAPSEGSRRSSSDLITLPATTPPCPTKKEWEGPATSYMTCSAYQKVQDSEISFPAGVEVQVLEKQESGWWYVRFGELEGWAPSHYLVLDENEQPDPSGKELDTVPAKGRQNEGKSDSLEKIERRVQALNTVNQSKKATPPIPSKPPGGFGKTSGTPAVKMRNGVRQVAVRPQSVFVSPPPKDNNLSCALRRNESLTATDGLRGVRRNSSFSTARSAAAEAKGRLAERAASQGSDSPLLPAQRNSIPVSPVRPKPIEKSQFIHNNLKDVYVSIADYEGDEETAGFQEGVSMEVLERNPNGWWYCQILDGVKPFKGWVPSNYLEKKN.

The region spanning 4 to 128 is the PX domain; it reads YCVQDATVVD…RFFEARPEDV (125 aa). In terms of domain architecture, SH3 1 spans 166–225; the sequence is MILEQYVVVSNYKKQENSELSLQAGEVVDVIEKNESGWWFVSTSEEQGWVPATYLEAQNG. Thr256 bears the Phosphothreonine mark. Residues 266–325 enclose the SH3 2 domain; sequence SREEKYVTVQPYTSQSKDEIGFEKGVTVEVIRKNLEGWWYIRYLGKEGWAPASYLKKAKD. 2 positions are modified to phosphoserine: Ser406 and Ser421. Disordered stretches follow at residues 415-446, 505-840, 899-924, and 941-964; these read QRAQ…PPEP, RKKP…EWEG, NEQP…GKSD, and QSKK…SGTP. The SH3 3 domain occupies 448–507; sequence SVEVEYYTIAEFQSCISDGISFRGGQKAEVIDKNSGGWWYVQIGEKEGWAPASYIDKRKK. Basic and acidic residues predominate over residues 546-555; that stretch reads DSPRKLKYEE. 2 positions are modified to phosphoserine: Ser547 and Ser567. Residues 567–576 are compositionally biased toward acidic residues; that stretch reads SEPELSEEPV. The segment covering 577 to 586 has biased composition (basic and acidic residues); it reads EDRASGERRP. Ser593 carries the post-translational modification Phosphoserine. Residues 608-620 are compositionally biased toward acidic residues; sequence SSEDVALEEETIY. 3 stretches are compositionally biased toward low complexity: residues 634 to 652, 658 to 670, and 686 to 715; these read SARG…SLSL, PKSG…SLLK, and SSAS…SKTS. The residue at position 644 (Ser644) is a Phosphoserine. Thr731 carries the post-translational modification Phosphothreonine. Phosphoserine occurs at positions 767, 769, and 819. Phosphothreonine is present on Thr829. Positions 840 to 899 constitute an SH3 4 domain; the sequence is GPATSYMTCSAYQKVQDSEISFPAGVEVQVLEKQESGWWYVRFGELEGWAPSHYLVLDEN. Residues 917-946 are a coiled coil; that stretch reads RQNEGKSDSLEKIERRVQALNTVNQSKKAT. Ser1002, Ser1016, Ser1017, and Ser1038 each carry phosphoserine. The tract at residues 1029 to 1059 is disordered; that stretch reads KGRLAERAASQGSDSPLLPAQRNSIPVSPVR. Residues 1072-1133 enclose the SH3 5 domain; that stretch reads NLKDVYVSIA…VPSNYLEKKN (62 aa).

The protein belongs to the SH3PXD2 family. As to quaternary structure, interacts (via N-terminus) with CYBA. Interacts with ADAM12, ADAM15 and ADAM19. Interacts with NOXO1. Interacts (via SH3 domains) with NOXA1. Interacts with FASLG. Interacts (via PX domain) with RAB40B (GTP-bound); interaction promotes invadopodia-mediated extracellular matrix degradation. Tyrosine phosphorylated by SRC. Phosphorylation plays a regulatory role in the protein localization. The intramolecular interaction of the PX domain with the third SH3 domain maintains the protein in the cytoplasm and phosphorylation disrupts this interaction, resulting in the redistribution of the protein from cytoplasm to the perimembrane region. Phosphorylated on serine upon DNA damage, probably by ATM or ATR. Found in several cancer cell lines, particularly invasive breast carcinomas and melanomas.

Its subcellular location is the cytoplasm. It is found in the cell projection. It localises to the podosome. In terms of biological role, adapter protein involved in invadopodia and podosome formation, extracellular matrix degradation and invasiveness of some cancer cells. Binds matrix metalloproteinases (ADAMs), NADPH oxidases (NOXs) and phosphoinositides. Acts as an organizer protein that allows NOX1- or NOX3-dependent reactive oxygen species (ROS) generation and ROS localization. In association with ADAM12, mediates the neurotoxic effect of amyloid-beta peptide. The sequence is that of SH3 and PX domain-containing protein 2A from Homo sapiens (Human).